The following is a 62-amino-acid chain: Phyllokinin-1 (62 aa).

The signal sequence occupies residues 1–19; that stretch reads MSFLKKSLFLVLFLGLVSS. Positions 20 to 48 are excised as a propeptide; sequence SICEEEKRETEEEENEDEIEEESEEKKRE. Residues 22–62 are disordered; that stretch reads CEEEKRETEEEENEDEIEEESEEKKREDPERPPGFTPFRVY. Residues 30–42 show a composition bias toward acidic residues; the sequence is EEEENEDEIEEES. A compositionally biased stretch (basic and acidic residues) spans 43 to 52; the sequence is EEKKREDPER. Tyr62 is modified (sulfotyrosine; partial).

This sequence belongs to the frog skin active peptide (FSAP) family. Bradykinin-related peptide subfamily. Asp,Pro,Glu-[Thr6,Val10]-phyllokinin and [Thr6,Val10]-phyllokinin occur in sulfated and nonsulfated forms. [Thr6]-bradykinin and Des-Arg-[Thr6]-bradykinin are nonsulfated. Expressed by the skin glands.

The protein resides in the secreted. In terms of biological role, inhibits ACE with a Ki of 1.6 uM, and targets B2 bradykinin receptor (BDKRB2). Provokes contraction of smooth muscle preparation (ileum). In vivo, induces an early hyperalgesic effects in living rats after intraplantar injection. This is Phyllokinin-1 from Pithecopus azureus (Orange-legged monkey tree frog).